Here is a 356-residue protein sequence, read N- to C-terminus: 4-hydroxy-2-oxovalerate aldolase (356 aa).

A Pyruvate carboxyltransferase domain is found at 7 to 257; that stretch reads PRVTDTTLRD…NPGLDVFKLM (251 aa). 15–16 is a substrate binding site; sequence RD. D16 contributes to the Mn(2+) binding site. The active-site Proton acceptor is the H19. S169 and H196 together coordinate substrate. Positions 196 and 198 each coordinate Mn(2+). Y287 is a substrate binding site.

It belongs to the 4-hydroxy-2-oxovalerate aldolase family.

The catalysed reaction is (S)-4-hydroxy-2-oxopentanoate = acetaldehyde + pyruvate. This is 4-hydroxy-2-oxovalerate aldolase from Thermomicrobium roseum (strain ATCC 27502 / DSM 5159 / P-2).